Consider the following 201-residue polypeptide: Recombination protein RecR (201 aa).

The C4-type zinc-finger motif lies at 57–72; that stretch reads CKSCRTFTEEDECAIC. The 96-residue stretch at 81 to 176 folds into the Toprim domain; that stretch reads GQLCVVEMPA…KVTRIAHGIP (96 aa).

Belongs to the RecR family.

Its function is as follows. May play a role in DNA repair. It seems to be involved in an RecBC-independent recombinational process of DNA repair. It may act with RecF and RecO. The chain is Recombination protein RecR from Glaesserella parasuis serovar 5 (strain SH0165) (Haemophilus parasuis).